Reading from the N-terminus, the 638-residue chain is Rik1-associated factor 1 (638 aa).

WD repeat units lie at residues 297-336, 486-525, 544-583, and 587-626; these read KEYSTISDLCFSKGNLFLYTGAFDNAVKVWDMEGNLCGIF, TTQKDINHATISNSGILVTSSGTDNQTFVWDSRKPDKPLS, EVDAGINMAQWQPKGNLFVTGGSDGIVKVWDLRLNNPFIQ, and EMNSAITYGGFSEDASKLTVCCVGGDVNMYSLGNDNGNKF.

Component of the Clr4 methyltransferase complex (ClrC) composed of at least clr4, rik1, pcu4, rbx1, raf1 and raf2. The cullin pcu4, rik1, raf1, raf2 and the ring-box protein rbx1 are components of an E3 ubiquitin ligase, whose activity is essential for heterochromatin assembly. Interacts with nup189.

It is found in the cytoplasm. The protein localises to the nucleus. It localises to the chromosome. Functionally, component of the Clr4 methyltransferase complex (ClrC) which contributes to the establishment of heterochromatin by specifically methylating histone H3 to form H3K9me. ClrC preferentially ubiquitylates H3K14 and ClrC-mediated H3 ubiquitination promotes clr4 methyltransferase activity for the methylation of H3K9. H3K9me represents a specific tag for epigenetic transcriptional repression by recruiting swi6/HP1 to methylated histones which leads to transcriptional silencing within centromeric heterochromatin, telomeric regions and at the silent mating-type loci. Has a role in both mitotic and meiotic chromosome segregation. This Schizosaccharomyces pombe (strain 972 / ATCC 24843) (Fission yeast) protein is Rik1-associated factor 1 (raf1).